Here is a 250-residue protein sequence, read N- to C-terminus: 3alpha-hydroxysteroid dehydrogenase (250 aa).

NADP(+)-binding residues include Asn93, Tyr158, and Lys162. Tyr158 serves as the catalytic Proton acceptor.

Belongs to the short-chain dehydrogenases/reductases (SDR) family.

The enzyme catalyses lithocholate + NADP(+) = 3-oxo-5beta-cholan-24-oate + NADPH + H(+). It catalyses the reaction deoxycholate + NADP(+) = 12alpha-hydroxy-3-oxo-5beta-cholan-24-oate + NADPH + H(+). It carries out the reaction deoxycholate + NAD(+) = 12alpha-hydroxy-3-oxo-5beta-cholan-24-oate + NADH + H(+). The catalysed reaction is cholate + NADP(+) = 7alpha,12alpha-dihydroxy-3-oxo-5beta-cholan-24-oate + NADPH + H(+). The enzyme catalyses chenodeoxycholate + NADP(+) = 3-oxochenodeoxycholate + NADPH + H(+). Its function is as follows. Involved in the modification of secondary bile acids into iso-bile acids (3beta-bile acids) via epimerization of the 3-OH group through a 3-oxo-intermediate. Catalyzes the oxidation of deoxycholate (DCA) and lithocholate (LCA) to yield 12-alpha-hydroxy-3-oxo-5-beta-cholan-24-oate (3-oxo-DCA) and 3-oxo-5-beta-cholan-24-oate (3-oxo-LCA), respectively. Is also able to catalyze the oxidation of cholate (CA) and chenodeoxycholate (CDCA) into 3-dehydrocholate (3-oxo-CA) and 7-alpha-hydroxy-3-oxo-5-beta-cholan-24-oate (3-oxo-CDCA), respectively. Can also catalyze the reverse reactions in vitro. Accepts both NADPH and NADH as cosubstrates. The conversion of the abundant bile acid DCA into isoDCA by the gut bacterium R.gnavus favors the growth of the keystone commensal genus Bacteroides, since isoDCA is less cytotoxic than its parent compound, DCA; iso-bile acids have thus a potential role in modulating gut community composition. This Mediterraneibacter gnavus (strain ATCC 29149 / DSM 114966 / JCM 6515 / VPI C7-9) (Ruminococcus gnavus) protein is 3alpha-hydroxysteroid dehydrogenase.